A 1097-amino-acid chain; its full sequence is FHIP family protein GK23746 (1097 aa).

Residues 1 to 21 (MSWLRSSPLRQSLTRTTSSGN) show a composition bias toward polar residues. Residues 1-25 (MSWLRSSPLRQSLTRTTSSGNGIRP) form a disordered region. Ser-491 carries the phosphoserine modification. Disordered stretches follow at residues 639–684 (DVSA…SGRR), 820–856 (NENSPLHQQQSLQHPHHLQPLPAPQQTGAGAQQRSAY), and 932–1042 (NNQQ…SEPV). Positions 641–654 (SASSGNGTGSVVVG) are enriched in low complexity. Ser-823 carries the phosphoserine modification. Low complexity-rich tracts occupy residues 824-852 (PLHQQQSLQHPHHLQPLPAPQQTGAGAQQ) and 932-948 (NNQQSSNQTHLNSSSSS). Residues 949–962 (AVTTCETSLSTQPH) show a composition bias toward polar residues. A compositionally biased stretch (low complexity) spans 973–985 (TTSSTISTSSGTT). Over residues 986 to 995 (AGSGGGGGSG) the composition is skewed to gly residues. 2 stretches are compositionally biased toward low complexity: residues 996–1006 (SNSSFSIGGST) and 1013–1022 (SNNTTNSSST).

This sequence belongs to the FHIP family.

The protein is FHIP family protein GK23746 of Drosophila willistoni (Fruit fly).